A 579-amino-acid chain; its full sequence is Trehalase (579 aa).

An N-terminal signal peptide occupies residues 1-15 (MRLFLLLVGLTTVIA). Asn29 and Asn58 each carry an N-linked (GlcNAc...) asparagine glycan. Residues Arg161, 168-169 (WD), Asn205, 214-216 (RSQ), 279-281 (RPE), and Gly313 each bind substrate. An N-linked (GlcNAc...) asparagine glycan is attached at Asn205. Asp315 serves as the catalytic Proton donor/acceptor. A glycan (N-linked (GlcNAc...) asparagine) is linked at Asn331. Glu513 acts as the Proton donor/acceptor in catalysis. Glu528 is a substrate binding site. Residues 560–569 (DASANNGQSN) show a composition bias toward polar residues. Positions 560–579 (DASANNGQSNEESETDSKEK) are disordered.

Belongs to the glycosyl hydrolase 37 family. In terms of tissue distribution, in midgut and Malpighian tubules.

It localises to the basolateral cell membrane. The catalysed reaction is alpha,alpha-trehalose + H2O = alpha-D-glucose + beta-D-glucose. Its function is as follows. Involved in uptake of hemolymph trehalose into epithelial cells in the midgut of feeding larvae. This chain is Trehalase, found in Bombyx mori (Silk moth).